The chain runs to 81 residues: RNA-binding protein Hfq (81 aa).

Residues Asp10–Val69 enclose the Sm domain.

Belongs to the Hfq family. In terms of assembly, homohexamer.

Functionally, RNA chaperone that binds small regulatory RNA (sRNAs) and mRNAs to facilitate mRNA translational regulation in response to envelope stress, environmental stress and changes in metabolite concentrations. Also binds with high specificity to tRNAs. The chain is RNA-binding protein Hfq from Methylobacillus flagellatus (strain ATCC 51484 / DSM 6875 / VKM B-1610 / KT).